The sequence spans 278 residues: Tryptophan synthase alpha chain (278 aa).

Active-site proton acceptor residues include glutamate 49 and aspartate 60.

This sequence belongs to the TrpA family. In terms of assembly, tetramer of two alpha and two beta chains.

The enzyme catalyses (1S,2R)-1-C-(indol-3-yl)glycerol 3-phosphate + L-serine = D-glyceraldehyde 3-phosphate + L-tryptophan + H2O. The protein operates within amino-acid biosynthesis; L-tryptophan biosynthesis; L-tryptophan from chorismate: step 5/5. Its function is as follows. The alpha subunit is responsible for the aldol cleavage of indoleglycerol phosphate to indole and glyceraldehyde 3-phosphate. The protein is Tryptophan synthase alpha chain of Psychrobacter arcticus (strain DSM 17307 / VKM B-2377 / 273-4).